Reading from the N-terminus, the 186-residue chain is Dihydrofolate reductase (186 aa).

The DHFR domain occupies 2-180 (RLNVVVAVSE…FTFKFCVYDV (179 aa)). Residues alanine 8 and 14–20 (GIGKGGG) each bind NADP(+). Residue 28–33 (DMEFFK) participates in substrate binding. Residue 51–53 (RVT) coordinates NADP(+). Arginine 67 is a binding site for substrate. NADP(+) contacts are provided by residues 73 to 75 (SST) and 112 to 119 (GGYRLYKE).

It belongs to the dihydrofolate reductase family. Monomer.

It catalyses the reaction (6S)-5,6,7,8-tetrahydrofolate + NADP(+) = 7,8-dihydrofolate + NADPH + H(+). It functions in the pathway cofactor biosynthesis; tetrahydrofolate biosynthesis; 5,6,7,8-tetrahydrofolate from 7,8-dihydrofolate: step 1/1. In terms of biological role, key enzyme in folate metabolism. Contributes to the de novo mitochondrial thymidylate biosynthesis pathway. Catalyzes an essential reaction for de novo glycine and purine synthesis, and for DNA precursor synthesis. The chain is Dihydrofolate reductase from Schistosoma mansoni (Blood fluke).